The primary structure comprises 1052 residues: Focal adhesion kinase 1 (1052 aa).

The disordered stretch occupies residues 1-27; it reads MAAAYLDPNLNHTPSSSTKTHLGTGME. At Ala2 the chain carries N-acetylalanine. Phosphotyrosine is present on Tyr5. Positions 10–21 are enriched in polar residues; that stretch reads LNHTPSSSTKTH. Thr13 bears the Phosphothreonine mark. Residues Ser29 and Ser54 each carry the phosphoserine modification. The region spanning 35 to 355 is the FERM domain; it reads RVLKVFHYFE…GYCRLVNGAT (321 aa). Residue Lys152 forms a Glycyl lysine isopeptide (Lys-Gly) (interchain with G-Cter in SUMO) linkage. Phosphotyrosine occurs at positions 397 and 407. Tyr397 carries the post-translational modification Phosphotyrosine; by autocatalysis. ATP is bound by residues 428 to 434, Lys454, and 500 to 502; these read IGEGQFG and ELC. A Protein kinase domain is found at 431 to 680; sequence GQFGDVHQGV…ELKAQLSTIL (250 aa). Asp546 acts as the Proton acceptor in catalysis. Position 570 is a phosphotyrosine (Tyr570). Phosphotyrosine; by RET and SRC occurs at positions 576 and 577. Position 580 is a phosphoserine (Ser580). Residues 685–697 show a composition bias toward basic and acidic residues; sequence VQQEERMRMESRR. Disordered stretches follow at residues 685–734 and 837–921; these read VQQE…PSPQ and VRLS…DRSN. The tract at residues 707–1052 is interaction with TGFB1I1; that stretch reads GSDEAPPKPS…LKMLGQTRPH (346 aa). Ser722 bears the Phosphoserine mark. Ser732 is subject to Phosphoserine; by CDK5. Over residues 837–849 the composition is skewed to basic and acidic residues; it reads VRLSRGSIDREDG. Ser843 bears the Phosphoserine mark. Tyr861 carries the phosphotyrosine modification. A compositionally biased stretch (pro residues) spans 869 to 880; it reads PAAPPKKPPRPG. A compositionally biased stretch (polar residues) spans 886–896; it reads SNLSSISSPAD. Residue Ser910 is modified to Phosphoserine. The segment at 912–1052 is interaction with ARHGEF28; the sequence is PPTANLDRSN…LKMLGQTRPH (141 aa). Thr914 carries the phosphothreonine modification. Tyr925 is subject to Phosphotyrosine; by SRC.

This sequence belongs to the protein kinase superfamily. Tyr protein kinase family. FAK subfamily. As to quaternary structure, interacts with GIT1. Component of a complex that contains at least FER, CTTN and PTK2/FAK1. Interacts with BMX. Interacts with STEAP4. Interacts with ZFYVE21. Interacts with ESR1. Interacts with FGR, FLT4 and RET. Interacts with EPHA2 in resting cells; activation of EPHA2 recruits PTPN11, leading to dephosphorylation of PTK2/FAK1 and dissociation of the complex. Interacts with EPHA1 (kinase activity-dependent). Interacts with MISP. Interacts with PIAS1. Interacts with ARHGAP26 and SHC1. Interacts with RB1CC1; this inhibits PTK2/FAK1 activity and activation of downstream signaling pathways. Interacts with P53/TP53. Interacts with STAT1. Interacts with WASL. Interacts with ARHGEF7. Interacts with DCC. Interacts (via first Pro-rich region) with CAS family members (via SH3 domain), including BCAR1, BCAR3 and CASS4. Interacts with NEDD9 (via C-terminus). Interacts with SORBS1. Interacts with ARHGEF28. Interacts with SHB. Part of a complex composed of THSD1, PTK2/FAK1, TLN1 and VCL. Interacts with PXN and TLN1. Interacts with TGFB1I1. Interacts with PIK3R1 or PIK3R2. Interacts with SRC, GRB2 and GRB7. Interacts with LPXN (via LD motif 3). Interacts with CD36. Interacts with EMP2; regulates PTK2 activation and localization. Interacts with DSCAM. Interacts with AMBRA1. Interacts (when tyrosine-phosphorylated) with tensin TNS1; the interaction is increased by phosphorylation of TNS1. Phosphorylated on tyrosine residues upon activation, e.g. upon integrin signaling. Tyr-397 is the major autophosphorylation site, but other kinases can also phosphorylate this residue. Phosphorylation at Tyr-397 promotes interaction with SRC and SRC family members, leading to phosphorylation at Tyr-576, Tyr-577 and at additional tyrosine residues. FGR promotes phosphorylation at Tyr-397 and Tyr-576. FER promotes phosphorylation at Tyr-577, Tyr-861 and Tyr-925, even when cells are not adherent. Tyr-397, Tyr-576 and Ser-722 are phosphorylated only when cells are adherent. Phosphorylation at Tyr-397 is important for interaction with BMX, PIK3R1 and SHC1. Phosphorylation at Tyr-925 is important for interaction with GRB2. Dephosphorylated by PTPN11; PTPN11 is recruited to PTK2 via EPHA2 (tyrosine phosphorylated). Microtubule-induced dephosphorylation at Tyr-397 is crucial for the induction of focal adhesion disassembly; this dephosphorylation could be catalyzed by PTPN11 and regulated by ZFYVE21. Phosphorylation on tyrosine residues is enhanced by NTN1. Post-translationally, sumoylated; this enhances autophosphorylation.

The protein resides in the cell junction. It is found in the focal adhesion. The protein localises to the cell membrane. It localises to the cytoplasm. Its subcellular location is the perinuclear region. The protein resides in the cell cortex. It is found in the cytoskeleton. The protein localises to the microtubule organizing center. It localises to the centrosome. Its subcellular location is the nucleus. The protein resides in the cilium basal body. The catalysed reaction is L-tyrosyl-[protein] + ATP = O-phospho-L-tyrosyl-[protein] + ADP + H(+). Its activity is regulated as follows. Subject to autoinhibition, mediated by interactions between the FERM domain and the kinase domain. Activated by autophosphorylation at Tyr-397. This promotes interaction with SRC and phosphorylation at Tyr-576 and Tyr-577 in the kinase activation loop by SRC. Phosphorylation at Tyr-397, Tyr-576 and Tyr-577 is required for maximal kinase activity. Functionally, non-receptor protein-tyrosine kinase that plays an essential role in regulating cell migration, adhesion, spreading, reorganization of the actin cytoskeleton, formation and disassembly of focal adhesions and cell protrusions, cell cycle progression, cell proliferation and apoptosis. Required for early embryonic development and placenta development. Required for embryonic angiogenesis, normal cardiomyocyte migration and proliferation, and normal heart development. Regulates axon growth and neuronal cell migration, axon branching and synapse formation; required for normal development of the nervous system. Plays a role in osteogenesis and differentiation of osteoblasts. Functions in integrin signal transduction, but also in signaling downstream of numerous growth factor receptors, G-protein coupled receptors (GPCR), EPHA2, netrin receptors and LDL receptors. Forms multisubunit signaling complexes with SRC and SRC family members upon activation; this leads to the phosphorylation of additional tyrosine residues, creating binding sites for scaffold proteins, effectors and substrates. Regulates numerous signaling pathways. Promotes activation of phosphatidylinositol 3-kinase and the AKT1 signaling cascade. Promotes activation of MAPK1/ERK2, MAPK3/ERK1 and the MAP kinase signaling cascade. Promotes localized and transient activation of guanine nucleotide exchange factors (GEFs) and GTPase-activating proteins (GAPs), and thereby modulates the activity of Rho family GTPases. Signaling via CAS family members mediates activation of RAC1. Phosphorylates NEDD9 following integrin stimulation. Recruits the ubiquitin ligase MDM2 to P53/TP53 in the nucleus, and thereby regulates P53/TP53 activity, P53/TP53 ubiquitination and proteasomal degradation. Phosphorylates SRC; this increases SRC kinase activity. Phosphorylates ACTN1, ARHGEF7, GRB7, RET and WASL. Promotes phosphorylation of PXN and STAT1; most likely PXN and STAT1 are phosphorylated by a SRC family kinase that is recruited to autophosphorylated PTK2/FAK1, rather than by PTK2/FAK1 itself. Promotes phosphorylation of BCAR1; GIT2 and SHC1; this requires both SRC and PTK2/FAK1. Promotes phosphorylation of BMX and PIK3R1. Does not contain a kinase domain and inhibits PTK2/FAK1 phosphorylation and signaling. Its enhanced expression can attenuate the nuclear accumulation of LPXN and limit its ability to enhance serum response factor (SRF)-dependent gene transcription. This chain is Focal adhesion kinase 1, found in Mus musculus (Mouse).